A 227-amino-acid chain; its full sequence is Peptidyl-tRNA hydrolase (227 aa).

Y14 contacts tRNA. H19 acts as the Proton acceptor in catalysis. TRNA is bound by residues F64, N66, and N112. A disordered region spans residues 182-227 (RIALLTQPPKPPKPPKPPKDGAKETAGKGTEAETAKPPGPAAGRTG). Over residues 198–215 (PPKDGAKETAGKGTEAET) the composition is skewed to basic and acidic residues.

It belongs to the PTH family. Monomer.

It is found in the cytoplasm. The catalysed reaction is an N-acyl-L-alpha-aminoacyl-tRNA + H2O = an N-acyl-L-amino acid + a tRNA + H(+). Its function is as follows. Hydrolyzes ribosome-free peptidyl-tRNAs (with 1 or more amino acids incorporated), which drop off the ribosome during protein synthesis, or as a result of ribosome stalling. Functionally, catalyzes the release of premature peptidyl moieties from peptidyl-tRNA molecules trapped in stalled 50S ribosomal subunits, and thus maintains levels of free tRNAs and 50S ribosomes. This is Peptidyl-tRNA hydrolase from Rhodospirillum centenum (strain ATCC 51521 / SW).